We begin with the raw amino-acid sequence, 350 residues long: Biotin synthase (350 aa).

The Radical SAM core domain maps to 38–256 (NYVQVSTLLS…IAVARIMMPT (219 aa)). 3 residues coordinate [4Fe-4S] cluster: Cys-53, Cys-57, and Cys-60. Residues Cys-97, Cys-128, Cys-188, and Arg-260 each coordinate [2Fe-2S] cluster.

Belongs to the radical SAM superfamily. Biotin synthase family. As to quaternary structure, homodimer. The cofactor is [4Fe-4S] cluster. It depends on [2Fe-2S] cluster as a cofactor.

The catalysed reaction is (4R,5S)-dethiobiotin + (sulfur carrier)-SH + 2 reduced [2Fe-2S]-[ferredoxin] + 2 S-adenosyl-L-methionine = (sulfur carrier)-H + biotin + 2 5'-deoxyadenosine + 2 L-methionine + 2 oxidized [2Fe-2S]-[ferredoxin]. It participates in cofactor biosynthesis; biotin biosynthesis; biotin from 7,8-diaminononanoate: step 2/2. In terms of biological role, catalyzes the conversion of dethiobiotin (DTB) to biotin by the insertion of a sulfur atom into dethiobiotin via a radical-based mechanism. The chain is Biotin synthase from Vibrio vulnificus (strain CMCP6).